A 91-amino-acid polypeptide reads, in one-letter code: MTEQKNKASLIEFPCAFPLKVMGAVHPEFEQAVLDTVRLHAPDTQAHHITTRPSSKGNYTGATVQVKVENQEQLDNIYRALTSHELVKVVL.

Belongs to the UPF0250 family.

This chain is UPF0250 protein NGK_1021, found in Neisseria gonorrhoeae (strain NCCP11945).